The sequence spans 243 residues: Geranylgeranylglyceryl phosphate synthase (243 aa).

Mg(2+) contacts are provided by D22 and S51. Sn-glycerol 1-phosphate is bound by residues Y169–G175, G200–G201, and G222–T223.

The protein belongs to the GGGP/HepGP synthase family. Group II subfamily. Requires Mg(2+) as cofactor.

It is found in the cytoplasm. The catalysed reaction is sn-glycerol 1-phosphate + (2E,6E,10E)-geranylgeranyl diphosphate = sn-3-O-(geranylgeranyl)glycerol 1-phosphate + diphosphate. It functions in the pathway membrane lipid metabolism; glycerophospholipid metabolism. Its function is as follows. Prenyltransferase that catalyzes the transfer of the geranylgeranyl moiety of geranylgeranyl diphosphate (GGPP) to the C3 hydroxyl of sn-glycerol-1-phosphate (G1P). This reaction is the first ether-bond-formation step in the biosynthesis of archaeal membrane lipids. This is Geranylgeranylglyceryl phosphate synthase from Methanosphaera stadtmanae (strain ATCC 43021 / DSM 3091 / JCM 11832 / MCB-3).